A 172-amino-acid chain; its full sequence is Small t antigen (172 aa).

The residue at position 1 (M1) is an N-acetylmethionine; by host. Residues 12–75 (ELMDLLGLER…VKVAHQPDFG (64 aa)) form the J domain. The segment at 101 to 114 (CSKKPSVHCPCMLC) adopts a C4-type; atypical zinc-finger fold. An H1C3-type; atypical zinc finger spans residues 120 to 141 (HLNRKFLRKEPLVWIDCYCIDC).

Interacts with host PPP2R1A; the interaction inhibits PP2A activity.

Its subcellular location is the host cytoplasm. It localises to the host nucleus. In terms of biological role, promotes efficient viral genome replication by accelerating both G1 and S phase progression of the cell cycle. Inhibits host PP2A by binding to the A subunit, thereby displacing lower affinity regulatory B subunit. Inactivation of PP2A in turn results in the transactivation of cyclin A and cyclin D1 promoters. Late during the infection cycle, ST may induce dephosphorylation of host MTOR, leading to the inhibition of cap-dependent translation. May establish and maintain high levels of viral genomes during persistent infection in cell culture. In Homo sapiens (Human), this protein is Small t antigen.